The sequence spans 506 residues: Chromosomal replication initiator protein DnaA (506 aa).

Positions 1–87 are domain I, interacts with DnaA modulators; it reads MSVELWQQCV…IGSRRSSAPR (87 aa). The domain II stretch occupies residues 87–169; that stretch reads RAAPNAPVSA…QVEGALKHTS (83 aa). A disordered region spans residues 135–154; it reads DSFDAMAEPAAAPPSGGGRA. Over residues 139-148 the composition is skewed to low complexity; the sequence is AMAEPAAAPP. A domain III, AAA+ region region spans residues 170 to 386; sequence YLNRTFTFDT…GALKRVIAHS (217 aa). ATP contacts are provided by Gly-214, Gly-216, Lys-217, and Thr-218. The tract at residues 387 to 506 is domain IV, binds dsDNA; it reads HFMGRDITIE…YKNLLRTLTT (120 aa).

Belongs to the DnaA family. As to quaternary structure, oligomerizes as a right-handed, spiral filament on DNA at oriC.

It is found in the cytoplasm. Functionally, plays an essential role in the initiation and regulation of chromosomal replication. ATP-DnaA binds to the origin of replication (oriC) to initiate formation of the DNA replication initiation complex once per cell cycle. Binds the DnaA box (a 9 base pair repeat at the origin) and separates the double-stranded (ds)DNA. Forms a right-handed helical filament on oriC DNA; dsDNA binds to the exterior of the filament while single-stranded (ss)DNA is stabiized in the filament's interior. The ATP-DnaA-oriC complex binds and stabilizes one strand of the AT-rich DNA unwinding element (DUE), permitting loading of DNA polymerase. After initiation quickly degrades to an ADP-DnaA complex that is not apt for DNA replication. Binds acidic phospholipids. In terms of biological role, non-cooperatively binds DnaA boxes in the minimal plasmid RK2 replication origin (oriV). In vitro in the presence of plasmid RK2-derived TrfA and E.coli protein HU, forms an open complex at oriV. This complex was not however competent for formation of a pre-priming complex with E.coli DnaB and DnaC. Broad host range plasmid RK2 requires not only DnaA for replication but also TrfA and host factors. This is Chromosomal replication initiator protein DnaA from Pseudomonas putida (strain ATCC 47054 / DSM 6125 / CFBP 8728 / NCIMB 11950 / KT2440).